A 339-amino-acid chain; its full sequence is 3-isopropylmalate dehydrogenase (339 aa).

The substrate site is built by R88, R98, R122, and D212. D212, D236, and D240 together coordinate Mg(2+). 272 to 284 (GSAPDIAGQGIAD) is an NAD(+) binding site.

It belongs to the isocitrate and isopropylmalate dehydrogenases family. LeuB type 2 subfamily. Homodimer. Mg(2+) serves as cofactor. It depends on Mn(2+) as a cofactor.

Its subcellular location is the cytoplasm. It catalyses the reaction (2R,3S)-3-isopropylmalate + NAD(+) = 4-methyl-2-oxopentanoate + CO2 + NADH. It functions in the pathway amino-acid biosynthesis; L-leucine biosynthesis; L-leucine from 3-methyl-2-oxobutanoate: step 3/4. In terms of biological role, catalyzes the oxidation of 3-carboxy-2-hydroxy-4-methylpentanoate (3-isopropylmalate) to 3-carboxy-4-methyl-2-oxopentanoate. The product decarboxylates to 4-methyl-2 oxopentanoate. The sequence is that of 3-isopropylmalate dehydrogenase from Corynebacterium urealyticum (strain ATCC 43042 / DSM 7109).